Here is a 162-residue protein sequence, read N- to C-terminus: Endoribonuclease YbeY (162 aa).

Zn(2+)-binding residues include H128, H132, and H138.

Belongs to the endoribonuclease YbeY family. Requires Zn(2+) as cofactor.

Its subcellular location is the cytoplasm. In terms of biological role, single strand-specific metallo-endoribonuclease involved in late-stage 70S ribosome quality control and in maturation of the 3' terminus of the 16S rRNA. The sequence is that of Endoribonuclease YbeY from Lactococcus lactis subsp. cremoris (strain SK11).